We begin with the raw amino-acid sequence, 276 residues long: Putative non-heme chloroperoxidase (276 aa).

The AB hydrolase-1 domain occupies 26–263 (PIVLIHGFPL…GGPHAINWTH (238 aa)). Residues S99, D228, and H257 contribute to the active site.

This sequence belongs to the AB hydrolase superfamily. Bacterial non-heme haloperoxidase / perhydrolase family.

In Synechocystis sp. (strain ATCC 27184 / PCC 6803 / Kazusa), this protein is Putative non-heme chloroperoxidase.